Consider the following 67-residue polypeptide: Toxin Cex8 (67 aa).

A signal peptide is located at residue A1. Residues 2-65 form the LCN-type CS-alpha/beta domain; the sequence is KEGYLVNIYT…SYPYPEKSCG (64 aa). Disulfide bonds link C13/C64, C17/C40, C26/C45, and C30/C47. C64 bears the Cysteine amide mark. Positions 65-67 are excised as a propeptide; that stretch reads GRK.

It belongs to the long (4 C-C) scorpion toxin superfamily. Sodium channel inhibitor family. Beta subfamily. Expressed by the venom gland.

It is found in the secreted. In terms of biological role, beta toxins bind voltage-independently at site-4 of sodium channels (Nav) and shift the voltage of activation toward more negative potentials thereby affecting sodium channel activation and promoting spontaneous and repetitive firing. The polypeptide is Toxin Cex8 (Centruroides exilicauda (Bark scorpion)).